The following is a 255-amino-acid chain: Ribosomal RNA small subunit methyltransferase A (255 aa).

S-adenosyl-L-methionine contacts are provided by Asn11, Leu13, Gly38, Glu59, Asp83, and Asn101.

This sequence belongs to the class I-like SAM-binding methyltransferase superfamily. rRNA adenine N(6)-methyltransferase family. RsmA subfamily.

The protein localises to the cytoplasm. The catalysed reaction is adenosine(1518)/adenosine(1519) in 16S rRNA + 4 S-adenosyl-L-methionine = N(6)-dimethyladenosine(1518)/N(6)-dimethyladenosine(1519) in 16S rRNA + 4 S-adenosyl-L-homocysteine + 4 H(+). In terms of biological role, specifically dimethylates two adjacent adenosines (A1518 and A1519) in the loop of a conserved hairpin near the 3'-end of 16S rRNA in the 30S particle. May play a critical role in biogenesis of 30S subunits. This Thiobacillus denitrificans (strain ATCC 25259 / T1) protein is Ribosomal RNA small subunit methyltransferase A.